Consider the following 631-residue polypeptide: Poly(A)-specific ribonuclease PARN (631 aa).

2 residues coordinate a divalent metal cation: Asp-28 and Glu-30. A disordered region spans residues Glu-147–Ile-173. Over residues Gln-152–Pro-170 the composition is skewed to polar residues. One can recognise an R3H domain in the interval Lys-178–Asp-244. Asp-291 and Asp-381 together coordinate a divalent metal cation. Positions Ser-568 to Trp-631 are disordered.

This sequence belongs to the CAF1 family. In terms of assembly, component of a complex at least composed of cpeb1, cpsf1, papd4/gld2, pabpc1/ePAB, parn and sympk. A divalent metal cation serves as cofactor. Post-translationally, a 62 kDa form, which is produced by proteolytic cleavage, also exists. In retina, it is constitutively present in most retinal cells, including the photoreceptors.

The protein localises to the cytoplasm. Its subcellular location is the nucleus. The enzyme catalyses Exonucleolytic cleavage of poly(A) to 5'-AMP.. Functionally, 3'-exoribonuclease that has a preference for poly(A) tails of mRNAs, thereby efficiently degrading poly(A) tails. Exonucleolytic degradation of the poly(A) tail is often the first step in the decay of eukaryotic mRNAs. Required during meiotic maturation to silence certain maternal mRNAs translationally. Does not require an adenosine residue at the 3' end, however, the addition of 25 non-adenylate residues at the 3' terminus, or a 3' terminal phosphate is inhibitory. Involved in dormant mRNAs regulation during oocyte maturation by counteracting polyadenylation mediated by papd4/gld2nt in immature eggs. During maturation it is excluded from the ribonucleoprotein complex, allowing poly(A) elongation by papd4/gld2nt and activation of mRNAs. The sequence is that of Poly(A)-specific ribonuclease PARN (parn) from Xenopus laevis (African clawed frog).